Reading from the N-terminus, the 63-residue chain is Large ribosomal subunit protein bL28 (63 aa).

It belongs to the bacterial ribosomal protein bL28 family.

The sequence is that of Large ribosomal subunit protein bL28 from Alkaliphilus metalliredigens (strain QYMF).